The sequence spans 288 residues: Probable proteasome subunit alpha type-7 (288 aa).

Residue threonine 2 is modified to N-acetylthreonine. The interval 247 to 288 (INGDDDEDEDDSDNVMSSDDENAPVATNANATTDQEGDIHLE) is disordered. Over residues 249–268 (GDDDEDEDDSDNVMSSDDEN) the composition is skewed to acidic residues. Positions 269–279 (APVATNANATT) are enriched in low complexity.

This sequence belongs to the peptidase T1A family. In terms of assembly, the 26S proteasome consists of a 20S proteasome core and two 19S regulatory subunits. The 20S proteasome core is composed of 28 subunits that are arranged in four stacked rings, resulting in a barrel-shaped structure. The two end rings are each formed by seven alpha subunits, and the two central rings are each formed by seven beta subunits. The catalytic chamber with the active sites is on the inside of the barrel. The alpha and beta forms are probably products of the same gene with different post-translational modifications.

It is found in the cytoplasm. The protein localises to the nucleus. In terms of biological role, the proteasome degrades poly-ubiquitinated proteins in the cytoplasm and in the nucleus. It is essential for the regulated turnover of proteins and for the removal of misfolded proteins. The proteasome is a multicatalytic proteinase complex that is characterized by its ability to cleave peptides with Arg, Phe, Tyr, Leu, and Glu adjacent to the leaving group at neutral or slightly basic pH. It has an ATP-dependent proteolytic activity. The chain is Probable proteasome subunit alpha type-7 (PRE10) from Saccharomyces cerevisiae (strain ATCC 204508 / S288c) (Baker's yeast).